We begin with the raw amino-acid sequence, 341 residues long: Two-component response regulator ORR30 (341 aa).

The Response regulatory domain occupies 12-127 (RVLVIDDDCS…ELSNIWQHIF (116 aa)). Asp-63 is subject to 4-aspartylphosphate. An HTH myb-type domain is found at 195 to 254 (DLGKSRLTWTTQLHRQFIAAVNHLGEDKAVPKKILGIMKVKHLTREQVASHLQKYRMQLK). Residues 225 to 250 (PKKILGIMKVKHLTREQVASHLQKYR) constitute a DNA-binding region (H-T-H motif).

It belongs to the ARR family. Type-B subfamily. Two-component system major event consists of a His-to-Asp phosphorelay between a sensor histidine kinase (HK) and a response regulator (RR). In plants, the His-to-Asp phosphorelay involves an additional intermediate named Histidine-containing phosphotransfer protein (HPt). This multistep phosphorelay consists of a His-Asp-His-Asp sequential transfer of a phosphate group between first a His and an Asp of the HK protein, followed by the transfer to a conserved His of the HPt protein and finally the transfer to an Asp in the receiver domain of the RR protein.

Its subcellular location is the nucleus. In terms of biological role, transcriptional activator that acts as a floral inducer to promote short-day (SD) flowering pathway. Activates HD3A and other FT-like genes independently from HD1. May also activate MADS-box transcription factors involved in flowering regulation. Functions as a response regulator involved in His-to-Asp phosphorelay signal transduction system. Phosphorylation of the Asp residue in the receiver domain activates the ability of the protein to promote the transcription of target genes. May directly activate some type-A response regulators in response to cytokinins. This Oryza sativa subsp. japonica (Rice) protein is Two-component response regulator ORR30.